The chain runs to 369 residues: Anhydro-N-acetylmuramic acid kinase (369 aa).

12–19 (GTSMDGVD) is an ATP binding site.

This sequence belongs to the anhydro-N-acetylmuramic acid kinase family.

The catalysed reaction is 1,6-anhydro-N-acetyl-beta-muramate + ATP + H2O = N-acetyl-D-muramate 6-phosphate + ADP + H(+). It participates in amino-sugar metabolism; 1,6-anhydro-N-acetylmuramate degradation. Its pathway is cell wall biogenesis; peptidoglycan recycling. Catalyzes the specific phosphorylation of 1,6-anhydro-N-acetylmuramic acid (anhMurNAc) with the simultaneous cleavage of the 1,6-anhydro ring, generating MurNAc-6-P. Is required for the utilization of anhMurNAc either imported from the medium or derived from its own cell wall murein, and thus plays a role in cell wall recycling. This chain is Anhydro-N-acetylmuramic acid kinase, found in Shewanella baltica (strain OS155 / ATCC BAA-1091).